The primary structure comprises 251 residues: Tritrans,polycis-undecaprenyl-diphosphate synthase (geranylgeranyl-diphosphate specific) (251 aa).

Residue aspartate 29 is part of the active site. Residue aspartate 29 coordinates Mg(2+). Residues 30–33, phenylalanine 34, histidine 46, and 74–76 each bind substrate; these read GNRR and STE. Asparagine 77 serves as the catalytic Proton acceptor. Residues phenylalanine 78, arginine 80, arginine 200, and 206–208 each bind substrate; that span reads RLS.

The protein belongs to the UPP synthase family. Homodimer. It depends on Mg(2+) as a cofactor.

It carries out the reaction geranylgeranyl diphosphate + 7 isopentenyl diphosphate = tri-trans,hepta-cis-undecaprenyl diphosphate + 7 diphosphate. Functionally, catalyzes the sequential condensation of isopentenyl diphosphate (IPP) with geranylgeranyl diphosphate (GGPP) to yield (2Z,6Z,10Z,14Z,18Z,22Z,26Z,30E,34E,38E)-undecaprenyl diphosphate (tritrans,heptacis-UPP). It is probably the precursor of glycosyl carrier lipids. The sequence is that of Tritrans,polycis-undecaprenyl-diphosphate synthase (geranylgeranyl-diphosphate specific) from Archaeoglobus fulgidus (strain ATCC 49558 / DSM 4304 / JCM 9628 / NBRC 100126 / VC-16).